Here is a 337-residue protein sequence, read N- to C-terminus: MNDCDEVNNISYDPLYRYSQFYTLLTSIFSVFPLLYLIIFKLRVCTFNDNIKFLYIVYFTQILISVLNNCVVFAHHVVIPFLAVSKCDLLVNPVKNRIFQNIGVFGISCPMLTILGITAERLLALIFARCYENVKLHIGVFIGVFAMLCDMALVYFFFLDEKFDQPSISYFMVPDTSGYKMNWLCYSLLAINSVNLVFNYFLVKINTILKEKWRNSLSTRYQMEENIITTKFSTFISFIHVFFFSLYLIFTLIIRLLGPGFLKTQADLMSVRGVYITIPTYNLIIGIASCVILRHLQRQKVAKVYAEVTLKYSGIDGAQIHQEAILNVWKTKSSGRK.

7 helical membrane-spanning segments follow: residues 20–40 (QFYTLLTSIFSVFPLLYLIIF), 62–82 (ILISVLNNCVVFAHHVVIPFL), 98–118 (IFQNIGVFGISCPMLTILGIT), 138–158 (IGVFIGVFAMLCDMALVYFFF), 183–203 (WLCYSLLAINSVNLVFNYFLV), 234–254 (TFISFIHVFFFSLYLIFTLII), and 273–293 (GVYITIPTYNLIIGIASCVIL).

It belongs to the nematode receptor-like protein srb family. In terms of tissue distribution, expressed in the ADL, ADF and ASH chemosensory neurons in the head and in the PHA and PHB chemosensory neurons in the tail. Low expression also observed in the egg-laying structures in the mid-body region.

The protein resides in the cell membrane. In terms of biological role, mediates recognition and avoidance of Streptomyces species by detecting dodecanoic acid secreted by the bacteria. Also mediates avoidance of decanoic acid which is not secreted by Streptomyces species but this may represent an additional important avoidance response in the environment. This chain is Serpentine receptor class beta-6 (srb-6), found in Caenorhabditis elegans.